The primary structure comprises 444 residues: Beta-D-glucosyl crocetin beta-1,6-glucosyltransferase (444 aa).

The active-site Proton acceptor is H9. An an anthocyanidin-binding site is contributed by H9. D108 functions as the Charge relay in the catalytic mechanism. The UDP-alpha-D-glucose site is built by T130, A319, Q321, H336, W339, N340, S341, E344, D360, and Q361.

This sequence belongs to the UDP-glycosyltransferase family. Ubiquitous.

The enzyme catalyses beta-D-glucosyl crocetin + UDP-alpha-D-glucose = beta-D-gentiobiosyl crocetin + UDP + H(+). It carries out the reaction bis(beta-D-glucosyl) crocetin + UDP-alpha-D-glucose = beta-D-gentiobiosyl beta-D-glucosyl crocetin + UDP + H(+). The catalysed reaction is beta-D-gentiobiosyl beta-D-glucosyl crocetin + UDP-alpha-D-glucose = bis(beta-D-gentiobiosyl) crocetin + UDP + H(+). In terms of biological role, glucosyltransferase catalyzing the beta 1-6 glucosylation of the sugar moiety of crocetin glucosyl esters to produce crocetin gentiobiosyl esters. Weak activity toward curcumin glucosides, but no activity with flavonoid glucosides, coumarin glucosides, 4-nitrophenyl glucoside or crocetin. Involved with UGT75L6 in sequential glycosylation of crocetin to crocin (bis(beta-D-gentiobiosyl) crocetin). In Gardenia jasminoides (Cape jasmine), this protein is Beta-D-glucosyl crocetin beta-1,6-glucosyltransferase (UGT94E5).